We begin with the raw amino-acid sequence, 335 residues long: Acetyl-coenzyme A carboxylase carboxyl transferase subunit alpha (335 aa).

A CoA carboxyltransferase C-terminal domain is found at 38–292 (TLEQKAEELR…ATALSEEIEN (255 aa)).

It belongs to the AccA family. Acetyl-CoA carboxylase is a heterohexamer composed of biotin carboxyl carrier protein (AccB), biotin carboxylase (AccC) and two subunits each of ACCase subunit alpha (AccA) and ACCase subunit beta (AccD).

The protein resides in the cytoplasm. It catalyses the reaction N(6)-carboxybiotinyl-L-lysyl-[protein] + acetyl-CoA = N(6)-biotinyl-L-lysyl-[protein] + malonyl-CoA. It functions in the pathway lipid metabolism; malonyl-CoA biosynthesis; malonyl-CoA from acetyl-CoA: step 1/1. Component of the acetyl coenzyme A carboxylase (ACC) complex. First, biotin carboxylase catalyzes the carboxylation of biotin on its carrier protein (BCCP) and then the CO(2) group is transferred by the carboxyltransferase to acetyl-CoA to form malonyl-CoA. This Heliobacterium modesticaldum (strain ATCC 51547 / Ice1) protein is Acetyl-coenzyme A carboxylase carboxyl transferase subunit alpha.